The sequence spans 232 residues: Demethylmenaquinone methyltransferase (232 aa).

Residues threonine 58, aspartate 79, and 104–105 (NA) each bind S-adenosyl-L-methionine.

The protein belongs to the class I-like SAM-binding methyltransferase superfamily. MenG/UbiE family.

It catalyses the reaction a 2-demethylmenaquinol + S-adenosyl-L-methionine = a menaquinol + S-adenosyl-L-homocysteine + H(+). It participates in quinol/quinone metabolism; menaquinone biosynthesis; menaquinol from 1,4-dihydroxy-2-naphthoate: step 2/2. In terms of biological role, methyltransferase required for the conversion of demethylmenaquinol (DMKH2) to menaquinol (MKH2). In Bacillus licheniformis (strain ATCC 14580 / DSM 13 / JCM 2505 / CCUG 7422 / NBRC 12200 / NCIMB 9375 / NCTC 10341 / NRRL NRS-1264 / Gibson 46), this protein is Demethylmenaquinone methyltransferase.